Reading from the N-terminus, the 130-residue chain is Fluoride-specific ion channel FluC (130 aa).

4 helical membrane-spanning segments follow: residues 3 to 23 (FVFLWAALGGAIGSSLRYFVG), 39 to 59 (GTFSVNIIGCFVIGFMGHLAV), 67 to 87 (FGIFFVTGVLGGFTTFSSYGL), and 102 to 122 (VSYALGTNILGLTGVAIGWFL). Positions 77 and 80 each coordinate Na(+).

Belongs to the fluoride channel Fluc/FEX (TC 1.A.43) family.

It is found in the cell inner membrane. The enzyme catalyses fluoride(in) = fluoride(out). Na(+) is not transported, but it plays an essential structural role and its presence is essential for fluoride channel function. Its function is as follows. Fluoride-specific ion channel. Important for reducing fluoride concentration in the cell, thus reducing its toxicity. The chain is Fluoride-specific ion channel FluC from Helicobacter pylori (strain ATCC 700392 / 26695) (Campylobacter pylori).